A 735-amino-acid chain; its full sequence is Funoran endo-beta-hydrolase (735 aa).

Residues 1–27 (MRVKSVYKKLSVSFILVMLSASQEVNS) form the signal peptide. The Proton donor role is filled by glutamate 200. Glutamate 322 functions as the Nucleophile in the catalytic mechanism.

Belongs to the glycosyl hydrolase 86 family.

It catalyses the reaction Endohydrolysis of beta-(1-&gt;4)-linkages between beta-D-galactopyranose-6-sulfate and 3,6-anhydro-alpha-L-galactopyranose units in funoran.. The enzyme catalyses Hydrolysis of (1-&gt;4)-beta-D-galactosidic linkages in agarose, giving the tetramer as the predominant product.. Agarase activity is enhanced in the presence of NaCl. Agarase activity is significantly inhibited by Zn(2+) and slightly activated by several divalent ions including Mg(2+), Cd(2+) and Ca(2+). In terms of biological role, endohydrolase that cleaves the beta-1,4 glycosidic bond between beta-D-galactopyranose-6-sulfate (G6S) and 3,6-anhydro-alpha-L-galactopyranose (LA) unit of funoran, a polysaccharide produced by red algae of the genus Gloiopeltis. It releases the disaccharide LA-G6S as the predominant end product. Also acts as a random endo-acting beta-agarase, which can hydrolyze agarose tetrasaccharides and hexasaccharides, and produces disaccharides as smallest products. Besides typical agarose oligosaccharides, it can use methylated galactoses. The enzyme exhibits higher catalytic efficiency towards agarose, but binds funoran preferentially. Has no activity on porphyran. The sequence is that of Funoran endo-beta-hydrolase from Wenyingzhuangia aestuarii.